The sequence spans 369 residues: CCA-adding enzyme (369 aa).

Residues G8 and R11 each coordinate ATP. Residues G8 and R11 each coordinate CTP. Positions 21 and 23 each coordinate Mg(2+). ATP-binding residues include R91, R137, and R140. R91, R137, and R140 together coordinate CTP.

Belongs to the tRNA nucleotidyltransferase/poly(A) polymerase family. Bacterial CCA-adding enzyme type 2 subfamily. Requires Mg(2+) as cofactor.

The enzyme catalyses a tRNA precursor + 2 CTP + ATP = a tRNA with a 3' CCA end + 3 diphosphate. It carries out the reaction a tRNA with a 3' CCA end + 2 CTP + ATP = a tRNA with a 3' CCACCA end + 3 diphosphate. Catalyzes the addition and repair of the essential 3'-terminal CCA sequence in tRNAs without using a nucleic acid template. Adds these three nucleotides in the order of C, C, and A to the tRNA nucleotide-73, using CTP and ATP as substrates and producing inorganic pyrophosphate. tRNA 3'-terminal CCA addition is required both for tRNA processing and repair. Also involved in tRNA surveillance by mediating tandem CCA addition to generate a CCACCA at the 3' terminus of unstable tRNAs. While stable tRNAs receive only 3'-terminal CCA, unstable tRNAs are marked with CCACCA and rapidly degraded. This chain is CCA-adding enzyme, found in Francisella tularensis subsp. novicida (strain U112).